Consider the following 165-residue polypeptide: PTS system glucose-specific EIIA component (165 aa).

The region spanning 34–138 (DPVFAQKMMG…SSITPIIISN (105 aa)) is the PTS EIIA type-1 domain. His71 and His86 together coordinate Zn(2+). His86 (tele-phosphohistidine intermediate; for EIIA activity) is an active-site residue. The residue at position 86 (His86) is a Phosphohistidine; by HPr.

As to quaternary structure, heterodimer with glycerol kinase (glpk). Zn(2+) is required as a cofactor.

It is found in the cytoplasm. Functionally, the phosphoenolpyruvate-dependent sugar phosphotransferase system (sugar PTS), a major carbohydrate active transport system, catalyzes the phosphorylation of incoming sugar substrates concomitantly with their translocation across the cell membrane. The enzyme II complex composed of PtsG and Crr is involved in glucose transport. In Oceanobacillus iheyensis (strain DSM 14371 / CIP 107618 / JCM 11309 / KCTC 3954 / HTE831), this protein is PTS system glucose-specific EIIA component (crr).